The chain runs to 809 residues: Ubiquitin carboxyl-terminal hydrolase 1 (809 aa).

The region spanning 101–738 is the USP domain; it reads AGLVNDGNTC…GVFMLFYEYD (638 aa). Cysteine 110 acts as the Nucleophile in catalysis. Residues 143 to 195 are disordered; sequence NEHNEEGNGQESAQDEATHKKNTRKGGKVYGKHKKKLNRKSSSKEDEEKSQEP. The segment covering 162–183 has biased composition (basic residues); that stretch reads KKNTRKGGKVYGKHKKKLNRKS. The segment covering 184 to 194 has biased composition (basic and acidic residues); sequence SSKEDEEKSQE. A phosphoserine mark is found at serine 530, serine 531, and serine 555. The segment at 569–596 is disordered; the sequence is ASHYNHTKDISNYDPLNGEVDGVTSDDE. Phosphoserine is present on residues serine 618 and serine 638. Residue threonine 652 is modified to Phosphothreonine. A phosphoserine mark is found at serine 653, serine 654, and serine 670. The active-site Proton acceptor is histidine 697. The tract at residues 750–809 is disordered; it reads LEAIQSNNEEDDEKEQEQKGVQEPKESQEQGEGEEQEEGQEQMKFERTEDHRDISGKDVN. A Phosphoserine modification is found at serine 755. Residues 765-777 show a composition bias toward basic and acidic residues; the sequence is QEQKGVQEPKESQ. A compositionally biased stretch (acidic residues) spans 778–789; that stretch reads EQGEGEEQEEGQ. A compositionally biased stretch (basic and acidic residues) spans 790–809; the sequence is EQMKFERTEDHRDISGKDVN.

It belongs to the peptidase C19 family.

The catalysed reaction is Thiol-dependent hydrolysis of ester, thioester, amide, peptide and isopeptide bonds formed by the C-terminal Gly of ubiquitin (a 76-residue protein attached to proteins as an intracellular targeting signal).. Has an ATP-independent isopeptidase activity, cleaving at the C-terminus of the ubiquitin moiety in natural or engineered linear fusion proteins, irrespective of their size or the presence of an N-terminal extension to ubiquitin. The polypeptide is Ubiquitin carboxyl-terminal hydrolase 1 (UBP1) (Saccharomyces cerevisiae (strain ATCC 204508 / S288c) (Baker's yeast)).